A 236-amino-acid chain; its full sequence is MNPVHILAKKGEVAERVLVVGDPGRARLLSTLLQNPKLTNENRGFLVYTGKYNGETVSIATHGIGGPSIAIVLEELAMLGANVFIRYGTTGALVPYINLGEYIIVTGASYNQGGLFYQYLRDNACVASTPDFELTNKLVTSFSKRNLKYYVGNVFSSDAFYAEDEEFVKKWSSRGNIAVEMECATLFTLSKVKGWKSATVLVVSDNLAKGGIWITKEELEKSVMDGAKAVLDTLTS.

H5 provides a ligand contact to a purine D-ribonucleoside. Phosphate contacts are provided by residues G21, R25, R43, and 86–89 (RYGT). A purine D-ribonucleoside contacts are provided by residues E163, 180 to 182 (EME), and 204 to 205 (SD).

Belongs to the PNP/UDP phosphorylase family. As to quaternary structure, homohexamer; disulfide-linked. Trimer of homodimers, with three symmetric intersubunit disulfide bonds linking the dimers to one another.

It carries out the reaction S-methyl-5'-thioadenosine + phosphate = 5-(methylsulfanyl)-alpha-D-ribose 1-phosphate + adenine. It catalyses the reaction a purine D-ribonucleoside + phosphate = a purine nucleobase + alpha-D-ribose 1-phosphate. The enzyme catalyses a purine 2'-deoxy-D-ribonucleoside + phosphate = a purine nucleobase + 2-deoxy-alpha-D-ribose 1-phosphate. It participates in purine metabolism; purine nucleoside salvage. In terms of biological role, cleavage of guanosine or inosine to respective bases and sugar-1-phosphate molecules. Cleaves inosine, guanosine, and adenosine with a better efficiency than MTA. This is Purine nucleoside phosphorylase from Saccharolobus solfataricus (strain ATCC 35092 / DSM 1617 / JCM 11322 / P2) (Sulfolobus solfataricus).